The sequence spans 47 residues: Potassium channel toxin gamma-KTx 5.1 (47 aa).

4 disulfides stabilise this stretch: C5-C23, C11-C34, C20-C39, and C24-C41.

The protein belongs to the ergtoxin family. Gamma-KTx 5 subfamily. Expressed by the venom gland.

Its subcellular location is the secreted. Its function is as follows. Reversibly blocks Kv11/ERG potassium channels. This chain is Potassium channel toxin gamma-KTx 5.1, found in Centruroides sculpturatus (Arizona bark scorpion).